Here is a 264-residue protein sequence, read N- to C-terminus: Glucosamine-6-phosphate deaminase (264 aa).

Residue aspartate 72 is the Proton acceptor; for enolization step of the active site. Catalysis depends on aspartate 141, which acts as the For ring-opening step. Residue histidine 143 is the Proton acceptor; for ring-opening step of the active site. Glutamate 148 acts as the For ring-opening step in catalysis.

It belongs to the glucosamine/galactosamine-6-phosphate isomerase family. NagB subfamily. In terms of assembly, homohexamer.

The enzyme catalyses alpha-D-glucosamine 6-phosphate + H2O = beta-D-fructose 6-phosphate + NH4(+). It participates in amino-sugar metabolism; N-acetylneuraminate degradation; D-fructose 6-phosphate from N-acetylneuraminate: step 5/5. Allosterically activated by N-acetylglucosamine 6-phosphate (GlcNAc6P). Functionally, catalyzes the reversible isomerization-deamination of glucosamine 6-phosphate (GlcN6P) to form fructose 6-phosphate (Fru6P) and ammonium ion. In Glaesserella parasuis serovar 5 (strain SH0165) (Haemophilus parasuis), this protein is Glucosamine-6-phosphate deaminase.